The primary structure comprises 173 residues: Crossover junction endodeoxyribonuclease RuvC (173 aa).

Active-site residues include Asp-8, Glu-67, and Asp-139. Residues Asp-8, Glu-67, and Asp-139 each contribute to the Mg(2+) site.

It belongs to the RuvC family. In terms of assembly, homodimer which binds Holliday junction (HJ) DNA. The HJ becomes 2-fold symmetrical on binding to RuvC with unstacked arms; it has a different conformation from HJ DNA in complex with RuvA. In the full resolvosome a probable DNA-RuvA(4)-RuvB(12)-RuvC(2) complex forms which resolves the HJ. Requires Mg(2+) as cofactor.

It localises to the cytoplasm. It catalyses the reaction Endonucleolytic cleavage at a junction such as a reciprocal single-stranded crossover between two homologous DNA duplexes (Holliday junction).. The RuvA-RuvB-RuvC complex processes Holliday junction (HJ) DNA during genetic recombination and DNA repair. Endonuclease that resolves HJ intermediates. Cleaves cruciform DNA by making single-stranded nicks across the HJ at symmetrical positions within the homologous arms, yielding a 5'-phosphate and a 3'-hydroxyl group; requires a central core of homology in the junction. The consensus cleavage sequence is 5'-(A/T)TT(C/G)-3'. Cleavage occurs on the 3'-side of the TT dinucleotide at the point of strand exchange. HJ branch migration catalyzed by RuvA-RuvB allows RuvC to scan DNA until it finds its consensus sequence, where it cleaves and resolves the cruciform DNA. This Klebsiella pneumoniae subsp. pneumoniae (strain ATCC 700721 / MGH 78578) protein is Crossover junction endodeoxyribonuclease RuvC.